A 544-amino-acid chain; its full sequence is Chaperonin GroEL (544 aa).

ATP is bound by residues 29-32, Lys50, 86-90, Gly414, 477-479, and Asp493; these read TMGP, DGTTT, and NAA. The segment at 525–544 is disordered; it reads DKPAMPSMPDMGGMGMPGMM.

This sequence belongs to the chaperonin (HSP60) family. Forms a cylinder of 14 subunits composed of two heptameric rings stacked back-to-back. Interacts with the co-chaperonin GroES.

It localises to the cytoplasm. It catalyses the reaction ATP + H2O + a folded polypeptide = ADP + phosphate + an unfolded polypeptide.. In terms of biological role, together with its co-chaperonin GroES, plays an essential role in assisting protein folding. The GroEL-GroES system forms a nano-cage that allows encapsulation of the non-native substrate proteins and provides a physical environment optimized to promote and accelerate protein folding. This chain is Chaperonin GroEL, found in Aliarcobacter butzleri (strain RM4018) (Arcobacter butzleri).